The primary structure comprises 264 residues: Short-chain dehydrogenase/reductase ucsE (264 aa).

The helical transmembrane segment at 13–32 (LVVVVGGTSGLGFAVAQAAV) threads the bilayer. 3 residues coordinate NADP(+): L23, S43, and D74. N125 is a glycosylation site (N-linked (GlcNAc...) asparagine). NADP(+) contacts are provided by R130 and K139. The active-site Proton donor is S157. 2 residues coordinate NADP(+): V202 and T204.

This sequence belongs to the short-chain dehydrogenases/reductases (SDR) family. NADP(+) serves as cofactor.

The protein localises to the membrane. Its pathway is mycotoxin biosynthesis. In terms of biological role, short-chain dehydrogenase/reductase; part of the gene cluster that mediates the biosynthesis of UCS1025A, a member of the pyrrolizidinone family that acts as a strong telomerase inhibitor and displays potent antibacterial and antitumor properties. These compounds share a hemiaminal-containing pyrrolizidinone core fused with a gamma-lactone, giving a furopyrrolizidine that is connected to a decalin fragment. The polyketide synthase module (PKS) of the PKS-NRPS ucsA is responsible for the synthesis of the polyketide backbone via the condensation of an acetyl-CoA starter unit with 6 malonyl-CoA units. The downstream nonribosomal peptide synthetase (NRPS) module then amidates the carboxyl end of the polyketide with a 2S,3S-methylproline derived from L-isoleucine by the 2-oxoglutarate-dependent dioxygenase ucsF which converts L-isoleucine to (4S,5S)-4-methylpyrroline-5-carboxylate that is further converted to 2S,3S-methylproline by the pyrroline-5-carboxylate reductase ucsG. Reductive release of the completed aminoacyl polyketide from the assembly line can form the 3-pyrrolin-2-one structure via an intramolecular Knoevenagel reaction. Because ucsA lacks a designated enoylreductase (ER) domain, the required activity is provided the enoyl reductase ucsL. This keto acyclic precursor is the substrate of the Diels-Alderase ucsH, that catalyzes the Diels-Alder cycloaddition. Oxidation of the 3S-methyl group to a carboxylate by the cytochrome P450 monooxygenase ucsK allows an oxa-Michael cyclization that might involve the reductase/dehydrogenase ucsI and which furnishes the furopyrrolizidine. The oxidase ucsJ likely plays a critical role in stereoselective reduction of the C5-C6 double bond to afford the required R-configured carboxylate group. Further enolization and oxidation at C5 by an unidentified enzyme affords the last intermediate that can undergo oxa-Michael cyclization to yield UCS1025A. The protein is Short-chain dehydrogenase/reductase ucsE of Acremonium sp.